The sequence spans 100 residues: Probable DNA-binding protein HU (100 aa).

The protein belongs to the bacterial histone-like protein family.

In terms of biological role, histone-like DNA-binding protein which is capable of wrapping DNA to stabilize it, and thus to prevent its denaturation under extreme environmental conditions. This is Probable DNA-binding protein HU (hup) from Chlamydia pneumoniae (Chlamydophila pneumoniae).